A 615-amino-acid chain; its full sequence is Semenogelin-1 (615 aa).

A signal peptide spans Met-1–Gly-23. Gln-24 is modified (pyrrolidone carboxylic acid). 3 disordered regions span residues Gln-24–Lys-118, Gly-133–Ser-160, and Gly-172–Tyr-585. Residues Ser-34 to Gln-46 show a composition bias toward polar residues. Positions Ala-50–Arg-80 are enriched in basic and acidic residues. A compositionally biased stretch (polar residues) spans Thr-81–Asn-91. Positions Phe-107–Lys-118 are enriched in basic and acidic residues. 3 stretches are compositionally biased toward polar residues: residues Gly-138–Ser-160, Ser-177–Leu-196, and Thr-209–Glu-224. N-linked (GlcNAc...) asparagine glycosylation is found at Asn-148, Asn-184, and Asn-223. The span at Gln-241–Phe-253 shows a compositional bias: basic and acidic residues. Residues Ser-254–Gln-265 are compositionally biased toward polar residues. Asn-258 and Asn-275 each carry an N-linked (GlcNAc...) asparagine glycan. A compositionally biased stretch (basic and acidic residues) spans Thr-283 to Ser-300. A glycan (N-linked (GlcNAc...) asparagine) is linked at Asn-306. Basic and acidic residues predominate over residues Thr-308 to Gln-317. Residue Asn-332 is glycosylated (N-linked (GlcNAc...) asparagine). Residues Thr-341 to Ser-358 are compositionally biased toward basic and acidic residues. Residue Asn-364 is glycosylated (N-linked (GlcNAc...) asparagine). Basic and acidic residues predominate over residues Thr-366–Gln-375. N-linked (GlcNAc...) asparagine glycosylation is present at Asn-390. Over residues Thr-399–Ser-416 the composition is skewed to basic and acidic residues. N-linked (GlcNAc...) asparagine glycosylation is present at Asn-422. Residues Thr-424–Gln-433 show a composition bias toward basic and acidic residues. Residue Asn-448 is glycosylated (N-linked (GlcNAc...) asparagine). Over residues Thr-457–Ser-474 the composition is skewed to basic and acidic residues. Asn-480 carries an N-linked (GlcNAc...) asparagine glycan. A compositionally biased stretch (basic and acidic residues) spans Lys-481–Gln-491. The N-linked (GlcNAc...) asparagine glycan is linked to Asn-506. Over residues Thr-515–Ser-532 the composition is skewed to basic and acidic residues. N-linked (GlcNAc...) asparagine glycosylation occurs at Asn-538. Positions Lys-539–Gln-549 are enriched in basic and acidic residues. Positions Lys-550–Gln-563 are enriched in polar residues.

It belongs to the semenogelin family. As to quaternary structure, occurs in disulfide-linked complexes. Post-translationally, transglutaminase substrate. Rapidly cleaved after ejaculation by KLK3/PSA, resulting in liquefaction of the semen coagulum and the progressive release of motile spermatozoa.

The protein localises to the secreted. In terms of biological role, predominant protein in semen. It participates in the formation of a gel matrix entrapping the accessory gland secretions and ejaculated spermatozoa. Fragments of semenogelin and/or fragments of the related proteins may contribute to the activation of progressive sperm movements as the gel-forming proteins are fragmented by KLK3/PSA. In Saguinus oedipus (Cotton-top tamarin), this protein is Semenogelin-1 (SEMG1).